The following is a 161-amino-acid chain: MDFRIGQGYDVHQLVPGRPLIIGGVTIPYERGLLGHSDADVLLHAITDALFGAAALGDIGRHFSDTDAAFKGADSRVLLRECAARVKAAGFTIQNVDSTVIAQAPKLAPHIDGMRANIAADLGLPLERVNVKAKTNEKLGYLGRGEGIEAQAAALLVKAGA.

Residues Asp10 and His12 each coordinate a divalent metal cation. 4-CDP-2-C-methyl-D-erythritol 2-phosphate is bound by residues 10–12 (DVH) and 36–37 (HS). Residue His44 participates in a divalent metal cation binding. 4-CDP-2-C-methyl-D-erythritol 2-phosphate-binding positions include 58-60 (DIG), 63-67 (FSDTD), and Arg144.

Belongs to the IspF family. As to quaternary structure, homotrimer. A divalent metal cation serves as cofactor.

It catalyses the reaction 4-CDP-2-C-methyl-D-erythritol 2-phosphate = 2-C-methyl-D-erythritol 2,4-cyclic diphosphate + CMP. The protein operates within isoprenoid biosynthesis; isopentenyl diphosphate biosynthesis via DXP pathway; isopentenyl diphosphate from 1-deoxy-D-xylulose 5-phosphate: step 4/6. Its function is as follows. Involved in the biosynthesis of isopentenyl diphosphate (IPP) and dimethylallyl diphosphate (DMAPP), two major building blocks of isoprenoid compounds. Catalyzes the conversion of 4-diphosphocytidyl-2-C-methyl-D-erythritol 2-phosphate (CDP-ME2P) to 2-C-methyl-D-erythritol 2,4-cyclodiphosphate (ME-CPP) with a corresponding release of cytidine 5-monophosphate (CMP). The protein is 2-C-methyl-D-erythritol 2,4-cyclodiphosphate synthase of Burkholderia ambifaria (strain MC40-6).